A 97-amino-acid polypeptide reads, in one-letter code: Anti-sigma-YlaC factor YlaD (97 aa).

The Zn(2+) site is built by His29, Cys33, and Cys36. Residues 71-93 (YYGLLIMKAACWFGAAVAMMLII) form a helical membrane-spanning segment.

Belongs to the zinc-associated anti-sigma factor (ZAS) superfamily. The cofactor is Zn(2+).

Its subcellular location is the cell membrane. Its function is as follows. Anti-sigma factor for YlaC. This chain is Anti-sigma-YlaC factor YlaD (ylaD), found in Bacillus subtilis (strain 168).